We begin with the raw amino-acid sequence, 310 residues long: Beta-carotene 3-hydroxylase 1, chloroplastic (310 aa).

Residues 1–51 (MAAGLSTAVTFKPLHRSFSSSSTDFRLRLPKSLSGFSPSLRFKRFSVCYVV) constitute a chloroplast transit peptide. Helical transmembrane passes span 98-118 (YLIA…MAVY) and 132-152 (MLEM…MEFW). Positions 145 to 272 (AAVGMEFWAR…KFNGVPYGLF (128 aa)) constitute a Fatty acid hydroxylase domain. The Histidine box-1 signature appears at 157-162 (HRALWH). A Histidine box-2 motif is present at residues 169-173 (HESHH). A run of 2 helical transmembrane segments spans residues 183-203 (NDVF…YGFF) and 208-228 (VPGL…AYMF). Residues 230-235 (HDGLVH) carry the Histidine box-3 motif. The Histidine box-4 motif lies at 256 to 260 (HQLHH).

Belongs to the sterol desaturase family. Homodimer. In terms of tissue distribution, expressed in leaves, flowers, stems, roots and siliques.

Its subcellular location is the plastid. The protein resides in the chloroplast membrane. It catalyses the reaction all-trans-beta-carotene + 4 reduced [2Fe-2S]-[ferredoxin] + 2 O2 + 4 H(+) = all-trans-zeaxanthin + 4 oxidized [2Fe-2S]-[ferredoxin] + 2 H2O. Its function is as follows. Nonheme diiron monooxygenase involved in the biosynthesis of xanthophylls. Specific for beta-ring hydroxylations of beta-carotene. Also has a low activity toward the beta- and epsilon-rings of alpha-carotene. No activity with acyclic carotenoids such as lycopene and neurosporene. Uses ferredoxin as an electron donor. In Arabidopsis thaliana (Mouse-ear cress), this protein is Beta-carotene 3-hydroxylase 1, chloroplastic (BETA-OHASE 1).